The primary structure comprises 254 residues: Leucyl/phenylalanyl-tRNA--protein transferase (254 aa).

This sequence belongs to the L/F-transferase family.

The protein localises to the cytoplasm. The enzyme catalyses N-terminal L-lysyl-[protein] + L-leucyl-tRNA(Leu) = N-terminal L-leucyl-L-lysyl-[protein] + tRNA(Leu) + H(+). The catalysed reaction is N-terminal L-arginyl-[protein] + L-leucyl-tRNA(Leu) = N-terminal L-leucyl-L-arginyl-[protein] + tRNA(Leu) + H(+). It catalyses the reaction L-phenylalanyl-tRNA(Phe) + an N-terminal L-alpha-aminoacyl-[protein] = an N-terminal L-phenylalanyl-L-alpha-aminoacyl-[protein] + tRNA(Phe). In terms of biological role, functions in the N-end rule pathway of protein degradation where it conjugates Leu, Phe and, less efficiently, Met from aminoacyl-tRNAs to the N-termini of proteins containing an N-terminal arginine or lysine. This Burkholderia cenocepacia (strain ATCC BAA-245 / DSM 16553 / LMG 16656 / NCTC 13227 / J2315 / CF5610) (Burkholderia cepacia (strain J2315)) protein is Leucyl/phenylalanyl-tRNA--protein transferase.